The chain runs to 206 residues: MITVALPKGRIAEETLDRFEKIFGERFVFEDRKLILERGEFKFLLVRNQDVPTYVLHQAADIGIVGLDVLEEQESDLIRLLDLGIGRCKVVIGSPMGSEIDYSKPQIKIATKMTNIAKKHFAKQALAVDLIKLYGSIELAPLVGLADAIVDIVETGTTMKQNHLKIDEVIMESSAYMVANRNSFYEKKDKILELQRQFSKLKEVRE.

The protein belongs to the ATP phosphoribosyltransferase family. Short subfamily. Heteromultimer composed of HisG and HisZ subunits.

It localises to the cytoplasm. It carries out the reaction 1-(5-phospho-beta-D-ribosyl)-ATP + diphosphate = 5-phospho-alpha-D-ribose 1-diphosphate + ATP. The protein operates within amino-acid biosynthesis; L-histidine biosynthesis; L-histidine from 5-phospho-alpha-D-ribose 1-diphosphate: step 1/9. Catalyzes the condensation of ATP and 5-phosphoribose 1-diphosphate to form N'-(5'-phosphoribosyl)-ATP (PR-ATP). Has a crucial role in the pathway because the rate of histidine biosynthesis seems to be controlled primarily by regulation of HisG enzymatic activity. The sequence is that of ATP phosphoribosyltransferase from Wolinella succinogenes (strain ATCC 29543 / DSM 1740 / CCUG 13145 / JCM 31913 / LMG 7466 / NCTC 11488 / FDC 602W) (Vibrio succinogenes).